The sequence spans 231 residues: Regulatory protein VanRc (231 aa).

A Response regulatory domain is found at lysine 4 to leucine 117. Residue aspartate 53 is modified to 4-aspartylphosphate. Positions valine 132 to lysine 231 form a DNA-binding region, ompR/PhoB-type.

Post-translationally, phosphorylated by VanSc.

The protein resides in the cytoplasm. In terms of biological role, member of the two-component regulatory system VanSc/VanRc. Binds to the promoter regions of target genes. Activates the transcription of vanC1 and vanXYC in response to vancomycin which results in vancomycin resistance. This Enterococcus gallinarum protein is Regulatory protein VanRc.